The chain runs to 263 residues: Ribosomal RNA small subunit methyltransferase A (263 aa).

N13, T15, G40, E61, D85, and N105 together coordinate S-adenosyl-L-methionine.

Belongs to the class I-like SAM-binding methyltransferase superfamily. rRNA adenine N(6)-methyltransferase family. RsmA subfamily.

It localises to the cytoplasm. It catalyses the reaction adenosine(1518)/adenosine(1519) in 16S rRNA + 4 S-adenosyl-L-methionine = N(6)-dimethyladenosine(1518)/N(6)-dimethyladenosine(1519) in 16S rRNA + 4 S-adenosyl-L-homocysteine + 4 H(+). Functionally, specifically dimethylates two adjacent adenosines (A1518 and A1519) in the loop of a conserved hairpin near the 3'-end of 16S rRNA in the 30S particle. May play a critical role in biogenesis of 30S subunits. The sequence is that of Ribosomal RNA small subunit methyltransferase A from Mycoplasma pneumoniae (strain ATCC 29342 / M129 / Subtype 1) (Mycoplasmoides pneumoniae).